Consider the following 91-residue polypeptide: Cell division topological specificity factor (91 aa).

The protein belongs to the MinE family.

In terms of biological role, prevents the cell division inhibition by proteins MinC and MinD at internal division sites while permitting inhibition at polar sites. This ensures cell division at the proper site by restricting the formation of a division septum at the midpoint of the long axis of the cell. The sequence is that of Cell division topological specificity factor from Chloroflexus aggregans (strain MD-66 / DSM 9485).